A 30-amino-acid chain; its full sequence is Cycloviolacin-O7 (30 aa).

The cyclopeptide (Ser-Asn) cross-link spans 1–30 (SIPCGESCVWIPCTITALAGCKCKSKVCYN). Cystine bridges form between Cys4-Cys21, Cys8-Cys23, and Cys13-Cys28.

Post-translationally, this is a cyclic peptide.

Probably participates in a plant defense mechanism. The chain is Cycloviolacin-O7 from Viola odorata (Sweet violet).